A 143-amino-acid polypeptide reads, in one-letter code: UPF0179 protein PTO0851 (143 aa).

Belongs to the UPF0179 family.

The polypeptide is UPF0179 protein PTO0851 (Picrophilus torridus (strain ATCC 700027 / DSM 9790 / JCM 10055 / NBRC 100828 / KAW 2/3)).